A 630-amino-acid chain; its full sequence is tRNA uridine 5-carboxymethylaminomethyl modification enzyme MnmG (630 aa).

Position 15-20 (15-20 (GAGHAG)) interacts with FAD. 276 to 290 (GPRYCPSIEDKIVRF) is a binding site for NAD(+).

The protein belongs to the MnmG family. In terms of assembly, homodimer. Heterotetramer of two MnmE and two MnmG subunits. The cofactor is FAD.

The protein resides in the cytoplasm. NAD-binding protein involved in the addition of a carboxymethylaminomethyl (cmnm) group at the wobble position (U34) of certain tRNAs, forming tRNA-cmnm(5)s(2)U34. The polypeptide is tRNA uridine 5-carboxymethylaminomethyl modification enzyme MnmG (Latilactobacillus sakei subsp. sakei (strain 23K) (Lactobacillus sakei subsp. sakei)).